Here is a 337-residue protein sequence, read N- to C-terminus: Holliday junction branch migration complex subunit RuvB (337 aa).

Residues 4–184 (ADRLIAPAAI…FGIVQRLEFY (181 aa)) form a large ATPase domain (RuvB-L) region. Residues Ile-23, Arg-24, Gly-65, Lys-68, Thr-69, Thr-70, 131 to 133 (EDY), Arg-174, Tyr-184, and Arg-221 each bind ATP. Residue Thr-69 participates in Mg(2+) binding. Residues 185 to 255 (KVEDLAHIVG…IAAQALDMLD (71 aa)) are small ATPAse domain (RuvB-S). The segment at 258-337 (NAGFDYMDRK…FGLTTPERQG (80 aa)) is head domain (RuvB-H). DNA contacts are provided by Arg-313 and Arg-318.

The protein belongs to the RuvB family. Homohexamer. Forms an RuvA(8)-RuvB(12)-Holliday junction (HJ) complex. HJ DNA is sandwiched between 2 RuvA tetramers; dsDNA enters through RuvA and exits via RuvB. An RuvB hexamer assembles on each DNA strand where it exits the tetramer. Each RuvB hexamer is contacted by two RuvA subunits (via domain III) on 2 adjacent RuvB subunits; this complex drives branch migration. In the full resolvosome a probable DNA-RuvA(4)-RuvB(12)-RuvC(2) complex forms which resolves the HJ.

The protein localises to the cytoplasm. The enzyme catalyses ATP + H2O = ADP + phosphate + H(+). The RuvA-RuvB-RuvC complex processes Holliday junction (HJ) DNA during genetic recombination and DNA repair, while the RuvA-RuvB complex plays an important role in the rescue of blocked DNA replication forks via replication fork reversal (RFR). RuvA specifically binds to HJ cruciform DNA, conferring on it an open structure. The RuvB hexamer acts as an ATP-dependent pump, pulling dsDNA into and through the RuvAB complex. RuvB forms 2 homohexamers on either side of HJ DNA bound by 1 or 2 RuvA tetramers; 4 subunits per hexamer contact DNA at a time. Coordinated motions by a converter formed by DNA-disengaged RuvB subunits stimulates ATP hydrolysis and nucleotide exchange. Immobilization of the converter enables RuvB to convert the ATP-contained energy into a lever motion, pulling 2 nucleotides of DNA out of the RuvA tetramer per ATP hydrolyzed, thus driving DNA branch migration. The RuvB motors rotate together with the DNA substrate, which together with the progressing nucleotide cycle form the mechanistic basis for DNA recombination by continuous HJ branch migration. Branch migration allows RuvC to scan DNA until it finds its consensus sequence, where it cleaves and resolves cruciform DNA. This chain is Holliday junction branch migration complex subunit RuvB, found in Tolumonas auensis (strain DSM 9187 / NBRC 110442 / TA 4).